Consider the following 291-residue polypeptide: ATP synthase gamma chain (291 aa).

This sequence belongs to the ATPase gamma chain family. As to quaternary structure, F-type ATPases have 2 components, CF(1) - the catalytic core - and CF(0) - the membrane proton channel. CF(1) has five subunits: alpha(3), beta(3), gamma(1), delta(1), epsilon(1). CF(0) has three main subunits: a, b and c.

It localises to the cell inner membrane. Produces ATP from ADP in the presence of a proton gradient across the membrane. The gamma chain is believed to be important in regulating ATPase activity and the flow of protons through the CF(0) complex. This Neisseria meningitidis serogroup C / serotype 2a (strain ATCC 700532 / DSM 15464 / FAM18) protein is ATP synthase gamma chain.